The primary structure comprises 212 residues: MILVGIDEAGRGSLIGPMVVAGVAIDSNFLKFLSEIGVKDSKKLTRKKREYLFGVILEYSYAISLVKAYPEEIDSENLNEITYRAMIQIIHSMSVYNPSIVTVDKVGNASAVEREIININSSPRVENNADVKYVEVSAASIIAKVVRDNIINELKKTYGDFGSGYPGDKKTVEWIKDLYSRQPTYALPIIRRSWKILQDIAPNYYIRKRDGN.

An RNase H type-2 domain is found at 1–206; sequence MILVGIDEAG…LQDIAPNYYI (206 aa). A divalent metal cation is bound by residues Asp-7, Glu-8, and Asp-104.

The protein belongs to the RNase HII family. Mn(2+) serves as cofactor. Mg(2+) is required as a cofactor.

The protein localises to the cytoplasm. The enzyme catalyses Endonucleolytic cleavage to 5'-phosphomonoester.. Its function is as follows. Endonuclease that specifically degrades the RNA of RNA-DNA hybrids. This chain is Ribonuclease HII, found in Sulfolobus acidocaldarius (strain ATCC 33909 / DSM 639 / JCM 8929 / NBRC 15157 / NCIMB 11770).